Consider the following 157-residue polypeptide: Endoribonuclease YbeY (157 aa).

Zn(2+) contacts are provided by histidine 113, histidine 117, and histidine 123.

The protein belongs to the endoribonuclease YbeY family. Zn(2+) is required as a cofactor.

The protein localises to the cytoplasm. Single strand-specific metallo-endoribonuclease involved in late-stage 70S ribosome quality control and in maturation of the 3' terminus of the 16S rRNA. In Ehrlichia ruminantium (strain Gardel), this protein is Endoribonuclease YbeY.